The sequence spans 230 residues: Ribonuclease 3 (230 aa).

Residues 1-134 (MKQLEELLST…FLGALLLDKG (134 aa)) enclose the RNase III domain. Glutamate 47 provides a ligand contact to Mg(2+). Residue aspartate 51 is part of the active site. Mg(2+) is bound by residues aspartate 120 and glutamate 123. Glutamate 123 is an active-site residue. The region spanning 160–229 (DYKTCLQEFL…AKNALAQLSE (70 aa)) is the DRBM domain.

The protein belongs to the ribonuclease III family. As to quaternary structure, homodimer. It depends on Mg(2+) as a cofactor.

It localises to the cytoplasm. It carries out the reaction Endonucleolytic cleavage to 5'-phosphomonoester.. In terms of biological role, digests double-stranded RNA. Involved in the processing of primary rRNA transcript to yield the immediate precursors to the large and small rRNAs (23S and 16S). Processes some mRNAs, and tRNAs when they are encoded in the rRNA operon. Processes pre-crRNA and tracrRNA of type II CRISPR loci if present in the organism. This is Ribonuclease 3 from Streptococcus pyogenes serotype M28 (strain MGAS6180).